A 177-amino-acid polypeptide reads, in one-letter code: MLLSDKAIRSLIREGKLIIDPLYEDSIRENGVDMRIGPEIAFPIVRGEVMDPTKDDPSLHFTVRRFSDEGIIIPGNTSILLVTEEYIKMPDDVAALCGLRSSIARWGFIAAPTLVDAGFEGQLTIEVMWTRPAPVRLYRGIRFLHVVFFRTEGKVERPYSGAYQGQRGVTLPKRLEK.

Residues 100–105 (RSSIAR) and aspartate 116 each bind dCTP. Residue glutamate 126 is the Proton donor/acceptor of the active site. Tyrosine 159 and glutamine 166 together coordinate dCTP.

Belongs to the dCTP deaminase family. Homotrimer.

It catalyses the reaction dCTP + H2O + H(+) = dUTP + NH4(+). The protein operates within pyrimidine metabolism; dUMP biosynthesis; dUMP from dCTP (dUTP route): step 1/2. Catalyzes the deamination of dCTP to dUTP. The polypeptide is dCTP deaminase (Korarchaeum cryptofilum (strain OPF8)).